The following is a 655-amino-acid chain: MEENIESVEEWVSKLDIETTKDIHVPKLLFDQVIGQDQAGEIVKKAALQRRHVILIGEPGTGKSMLAQSMVDFLPKSELEDILVFPNPEDPNKPKIKTVPAGKGKEIVRQYQIKAEREKRDRSRSIMFVIFSVVLLGIIAAIVLRSITLIFFAIMAAAFLYMAMAFNPVIRNEKAMVPKLLVSHSSTDKPPFVDSTGAHSGALLGDVRHDPFQSGGLETPAHERVEAGNIHKAHKGVLFIDEINLLRPEDQQAILTALQEKKYPISGQSERSAGAMVQTEPVPCDFVLVAAGNYDAIRNMHPALRSRIRGYGYEVVVNDYMDDNDENRKKLVQFIAQEVEKDKKIPHFDKSAIVEIIKEAQKRSGRRNKLTLRLRELGGLVRVAGDIAVSQKRNIVTASDVIAAKALSKPLEQQIADKSIEIKKIYKTFRTEGSVVGMVNGLAVVGADTGMAEYTGVVLPIVAEVTPAEHKGAGNIIATGKLGDIAKEAVLNVSAVFKKITGKDISNMDIHIQFVGTYEGVEGDSASVSIATAVISAIENIPVDQSVAMTGSLSVRGDVLPVGGVTAKVEAAIEAGMAKVIVPELNYNDIILDAEHINRIQIIPARTIEDVLKVALVNSPEKDKLFDRIASIINNAKIIKPQKPVASTRAGQNVA.

Residues 1-123 (MEENIESVEE…KAEREKRDRS (123 aa)) are Cytoplasmic-facing. Position 57-64 (57-64 (GEPGTGKS)) interacts with ATP. Residues 124–144 (RSIMFVIFSVVLLGIIAAIVL) form a helical membrane-spanning segment. Residue Arg145 is a topological domain, extracellular. The helical transmembrane segment at 146 to 166 (SITLIFFAIMAAAFLYMAMAF) threads the bilayer. The Cytoplasmic portion of the chain corresponds to 167 to 655 (NPVIRNEKAM…ASTRAGQNVA (489 aa)). The Lon proteolytic domain occupies 433 to 618 (GSVVGMVNGL…EDVLKVALVN (186 aa)). Active-site residues include Ser525 and Lys568.

The protein belongs to the peptidase S16 family. Archaeal LonB subfamily. As to quaternary structure, homohexamer. Organized in a ring with a central cavity.

The protein localises to the cell membrane. Functionally, ATP-dependent serine protease that mediates the selective degradation of mutant and abnormal proteins as well as certain short-lived regulatory proteins. Degrades polypeptides processively. This chain is Archaeal Lon protease, found in Thermoplasma volcanium (strain ATCC 51530 / DSM 4299 / JCM 9571 / NBRC 15438 / GSS1).